The primary structure comprises 2430 residues: Transcription factor HIVEP2 (2430 aa).

Residues 1–127 (MDTGDTALGQ…SLEGPPWLFP (127 aa)) form a disordered region. Polar residues-rich tracts occupy residues 11-22 (KATSRSGETDSV) and 96-110 (HSLS…QGMT). 2 C2H2-type zinc fingers span residues 189-211 (YICP…IRSH) and 217-239 (YPCI…RKSH). Disordered regions lie at residues 271–302 (IHSD…PPVP), 374–418 (SEKK…NTNA), and 744–995 (AHGH…SGKH). Residues 381 to 418 (SEPSLNLLSPHSKGSTDSGYFSRSESAEQQISPPNTNA) are compositionally biased toward polar residues. Basic and acidic residues-rich tracts occupy residues 744–753 (AHGHSDRLDP) and 775–784 (DPDKMTDLGK). Residues 792-804 (SVIQHTNSLSRPN) show a composition bias toward polar residues. Position 811 is a phosphoserine (Ser-811). The segment covering 853 to 863 (SKPTPSQQVPQ) has biased composition (polar residues). A compositionally biased stretch (basic and acidic residues) spans 884–908 (RVTEEPDKPEKEKEAPTKEPEKPVE). A Nuclear localization signal motif is present at residues 929 to 935 (PKKKRLR). 5 positions are modified to phosphoserine: Ser-942, Ser-947, Ser-1040, Ser-1431, and Ser-1435. Low complexity predominate over residues 944 to 974 (GESSFESTGTGLSRSPSQESNLSHSSSFSMS). The tract at residues 1472-1584 (KKGLSRPQKP…GGQQEEEGKA (113 aa)) is disordered. Low complexity-rich tracts occupy residues 1499-1520 (SRSS…SASG) and 1560-1569 (SDMSMSPQSS). C2H2-type zinc fingers lie at residues 1783 to 1805 (YICE…IRTH) and 1811 to 1835 (YVCK…SKAH). Disordered stretches follow at residues 1848–1931 (SVDD…SSLP) and 1986–2117 (FQSK…SPRR). The segment covering 1850–1860 (DDTETEEAENM) has biased composition (acidic residues). Over residues 1861 to 1871 (EELHKTSEKHS) the composition is skewed to basic and acidic residues. A compositionally biased stretch (acidic residues) spans 1883–1909 (DAEESDGEDGDDNDDDDEDDDDFDDQG). A compositionally biased stretch (basic and acidic residues) spans 1991 to 2001 (TDSEPDKDRLD). The segment covering 2013 to 2037 (SSEPSSSPRDFSPSSYRSSPGYDSS) has biased composition (low complexity). Repeat copies occupy residues 2037 to 2040 (SPCR), 2043 to 2046 (SPKR), 2055 to 2058 (SPRR), 2067 to 2070 (SPMR), 2073 to 2076 (SPRK), 2090 to 2093 (SPRR), 2096 to 2099 (SPRR), 2102 to 2105 (SPGK), 2114 to 2117 (SPRR), and 2129 to 2132 (SPRR). A 10 X 4 AA tandem repeats of S-P-[RGMKC]-[RK] region spans residues 2037–2132 (SPCRDNSPKR…TTIRAPSPRR (96 aa)). A compositionally biased stretch (basic and acidic residues) spans 2062-2085 (PRRDLSPMRHLSPRKEAALRREMS). Ser-2102 bears the Phosphoserine mark. A compositionally biased stretch (basic and acidic residues) spans 2107 to 2116 (ITARRDLSPR). Disordered regions lie at residues 2226–2252 (PALS…GAPG), 2268–2309 (KQAP…QEEN), and 2352–2430 (SIRH…NQLH). The segment covering 2271–2289 (PQVLQSSGLPSSPSSPRLL) has biased composition (low complexity). 2 positions are modified to phosphoserine: Ser-2281 and Ser-2285. Residues 2291 to 2301 (KQSTSEDSLNS) show a composition bias toward polar residues. The segment covering 2371 to 2380 (PDLHDGEKDT) has biased composition (basic and acidic residues). The segment covering 2406–2417 (FQSSKELSLSTE) has biased composition (polar residues). Ser-2413 and Ser-2415 each carry phosphoserine.

Interacts with TCF4. Expressed in heart, lung, skeletal muscle and liver. In the brain expressed in cerebral cortex, hippocampus, corpora amygdala and cerebellar cortex.

It localises to the nucleus. Specifically binds to the DNA sequence 5'-GGGACTTTCC-3' which is found in the enhancer elements of numerous viral promoters such as those of SV40, CMV, or HIV1. In addition, related sequences are found in the enhancer elements of a number of cellular promoters, including those of the class I MHC, interleukin-2 receptor, somatostatin receptor II, and interferon-beta genes. It may act in T-cell activation. This is Transcription factor HIVEP2 (Hivep2) from Mus musculus (Mouse).